The chain runs to 266 residues: Calpain small subunit 1 (266 aa).

Met1 is subject to N-acetylmethionine. Phosphoserine is present on Ser6. The region spanning 94-128 (EEVRQFRRLFAQLAGDDMEVSATELMNILNKVVTR) is the EF-hand 1; atypical domain. Ala107, Asp110, Glu112, Glu117, Asp135, Asp150, Asp152, Thr154, Lys156, and Glu161 together coordinate Ca(2+). 4 EF-hand domains span residues 137-170 (FGLD…NNIK), 167-202 (NNIK…AGFH), 203-231 (LNEH…ISCL), and 232-266 (VRLD…TMYS). Lys177 is subject to N6-acetyllysine. Positions 180, 182, 184, 186, 191, and 223 each coordinate Ca(2+).

Homodimer or heterodimer of a large (catalytic) and a small (regulatory) subunit. In presence of calcium, the heterodimer dissociates. In terms of processing, the N-terminus is blocked.

Its subcellular location is the cytoplasm. It localises to the cell membrane. Functionally, regulatory subunit of the calcium-regulated non-lysosomal thiol-protease which catalyzes limited proteolysis of substrates involved in cytoskeletal remodeling and signal transduction. Essential for embryonic development. This chain is Calpain small subunit 1 (CAPNS1), found in Oryctolagus cuniculus (Rabbit).